The sequence spans 475 residues: Aspartyl/glutamyl-tRNA(Asn/Gln) amidotransferase subunit B (475 aa).

The protein belongs to the GatB/GatE family. GatB subfamily. In terms of assembly, heterotrimer of A, B and C subunits.

It catalyses the reaction L-glutamyl-tRNA(Gln) + L-glutamine + ATP + H2O = L-glutaminyl-tRNA(Gln) + L-glutamate + ADP + phosphate + H(+). The catalysed reaction is L-aspartyl-tRNA(Asn) + L-glutamine + ATP + H2O = L-asparaginyl-tRNA(Asn) + L-glutamate + ADP + phosphate + 2 H(+). Allows the formation of correctly charged Asn-tRNA(Asn) or Gln-tRNA(Gln) through the transamidation of misacylated Asp-tRNA(Asn) or Glu-tRNA(Gln) in organisms which lack either or both of asparaginyl-tRNA or glutaminyl-tRNA synthetases. The reaction takes place in the presence of glutamine and ATP through an activated phospho-Asp-tRNA(Asn) or phospho-Glu-tRNA(Gln). This Bacillus cereus (strain ZK / E33L) protein is Aspartyl/glutamyl-tRNA(Asn/Gln) amidotransferase subunit B.